Reading from the N-terminus, the 387-residue chain is Monomeric sarcosine oxidase (387 aa).

Residue 6 to 36 coordinates FAD; the sequence is DVIVVGAGSMGMAAGYYLAKQGVKTLLVDSF. Cys316 is subject to S-8alpha-FAD cysteine.

Belongs to the MSOX/MTOX family. MSOX subfamily. As to quaternary structure, monomer. FAD serves as cofactor.

Its subcellular location is the cytoplasm. The enzyme catalyses sarcosine + O2 + H2O = formaldehyde + glycine + H2O2. Its function is as follows. Catalyzes the oxidative demethylation of sarcosine. The chain is Monomeric sarcosine oxidase (soxA) from Bacillus sp. (strain NS-129).